The primary structure comprises 191 residues: Photosystem I assembly protein Ycf4 (191 aa).

2 helical membrane passes run 34–54 (VASM…SSYF) and 68–88 (IFVP…LLAI).

This sequence belongs to the Ycf4 family.

It localises to the cellular thylakoid membrane. Seems to be required for the assembly of the photosystem I complex. This is Photosystem I assembly protein Ycf4 from Prochlorococcus marinus (strain NATL2A).